We begin with the raw amino-acid sequence, 408 residues long: Acetate kinase (408 aa).

Residue asparagine 7 coordinates Mg(2+). Lysine 14 contributes to the ATP binding site. Arginine 91 lines the substrate pocket. The Proton donor/acceptor role is filled by aspartate 148. ATP contacts are provided by residues 208–212 (HLGNG), 283–285 (DFR), and 331–335 (GIGEN). Mg(2+) is bound at residue glutamate 384.

This sequence belongs to the acetokinase family. Homodimer. Mg(2+) is required as a cofactor. Mn(2+) serves as cofactor.

Its subcellular location is the cytoplasm. The catalysed reaction is acetate + ATP = acetyl phosphate + ADP. It participates in metabolic intermediate biosynthesis; acetyl-CoA biosynthesis; acetyl-CoA from acetate: step 1/2. Functionally, catalyzes the formation of acetyl phosphate from acetate and ATP. Can also catalyze the reverse reaction. The chain is Acetate kinase from Methanosarcina mazei (Methanosarcina frisia).